The following is a 175-amino-acid chain: DPY30 domain-containing protein 1 (175 aa).

Residues 94–112 (QQKEKQKSEDFETGQEKSF) show a composition bias toward basic and acidic residues. Disordered stretches follow at residues 94-134 (QQKE…QAEE) and 152-175 (APNLSRVEELDEPMLSDNGVSAPP).

Belongs to the dpy-30 family. In terms of assembly, component of the axonemal radial spoke complex 1 (RS1), at least composed of spoke head proteins RSPH1, RSPH3, RSPH9 and the cilia-specific component RSPH4A or sperm-specific component RSPH6A, spoke stalk proteins RSPH14, DNAJB13, DYDC1, ROPN1L and NME5, and the anchor protein IQUB. Interacts with SH3GL3.

The protein resides in the cytoplasm. The protein localises to the cytoskeleton. It is found in the flagellum axoneme. Functions as part of axonemal radial spoke complexes that play an important part in the motility of sperm and cilia. Plays a crucial role during acrosome biogenesis. The polypeptide is DPY30 domain-containing protein 1 (Dydc1) (Mus musculus (Mouse)).